Reading from the N-terminus, the 356-residue chain is Heat-inducible transcription repressor HrcA (356 aa).

It belongs to the HrcA family.

Its function is as follows. Negative regulator of class I heat shock genes (grpE-dnaK-dnaJ and groELS operons). Prevents heat-shock induction of these operons. The polypeptide is Heat-inducible transcription repressor HrcA (Brucella abortus (strain S19)).